Here is a 935-residue protein sequence, read N- to C-terminus: Isoleucine--tRNA ligase (935 aa).

The short motif at 58 to 68 is the 'HIGH' region element; it reads PYANGSIHVGH. Position 558 (Glu558) interacts with L-isoleucyl-5'-AMP. The short motif at 599–603 is the 'KMSKS' region element; sequence KMSKS. Lys602 lines the ATP pocket. Zn(2+)-binding residues include Cys897, Cys900, Cys917, and Cys920.

It belongs to the class-I aminoacyl-tRNA synthetase family. IleS type 1 subfamily. In terms of assembly, monomer. The cofactor is Zn(2+).

The protein localises to the cytoplasm. It carries out the reaction tRNA(Ile) + L-isoleucine + ATP = L-isoleucyl-tRNA(Ile) + AMP + diphosphate. In terms of biological role, catalyzes the attachment of isoleucine to tRNA(Ile). As IleRS can inadvertently accommodate and process structurally similar amino acids such as valine, to avoid such errors it has two additional distinct tRNA(Ile)-dependent editing activities. One activity is designated as 'pretransfer' editing and involves the hydrolysis of activated Val-AMP. The other activity is designated 'posttransfer' editing and involves deacylation of mischarged Val-tRNA(Ile). This Francisella philomiragia subsp. philomiragia (strain ATCC 25017 / CCUG 19701 / FSC 153 / O#319-036) protein is Isoleucine--tRNA ligase.